The chain runs to 1251 residues: Myosin-1 (1251 aa).

Positions 1-37 are disordered; that stretch reads MGQSKRPFKNKEEKKSRGFGRSRHDDAGAGGRPQVKK. Residues 9–27 show a composition bias toward basic and acidic residues; that stretch reads KNKEEKKSRGFGRSRHDDA. The Myosin motor domain maps to 48 to 727; the sequence is IGVSDLTLLS…TLFALEHMRD (680 aa). 141 to 148 contributes to the ATP binding site; that stretch reads GESGAGKT. Serine 369 is subject to Phosphoserine. Residues 416-498 are actin-binding; the sequence is TIGILDIYGF…PGVFAALNDA (83 aa). IQ domains are found at residues 731 to 751 and 752 to 777; these read HNMA…RTEC and AIRI…QGHK. In terms of domain architecture, TH1 spans 785–980; it reads RRRYSLVGSR…PGEPANSVSK (196 aa). Disordered regions lie at residues 958-1093 and 1135-1227; these read RDDV…SNEL and AKTP…ASIA. Low complexity predominate over residues 1040 to 1052; that stretch reads VAQSVTAVAAAHA. Positions 1061–1073 are enriched in pro residues; the sequence is RPPPPPPPTQPPA. The 62-residue stretch at 1074–1135 folds into the SH3 domain; that stretch reads PKKDTAKALY…PEAYLEPIVA (62 aa). Residues 1139–1148 are compositionally biased toward pro residues; that stretch reads SLPPPPPSLP. 2 stretches are compositionally biased toward polar residues: residues 1150 to 1161 and 1216 to 1225; these read QSKSAVSNTLPN and ATPSSLSNAS.

Belongs to the TRAFAC class myosin-kinesin ATPase superfamily. Myosin family. In terms of processing, phosphorylation of the TEDS site (Ser-369) is required for the polarization of the actin cytoskeleton. Phosphorylation probably activates the myosin-I ATPase activity.

It localises to the cytoplasm. The protein resides in the cytoskeleton. Its subcellular location is the actin patch. Its function is as follows. Type-I myosin implicated in the organization of the actin cytoskeleton. Required for proper actin cytoskeleton polarization. At the cell cortex, assembles in patch-like structures together with proteins from the actin-polymerizing machinery and promotes actin assembly. Functions as actin nucleation-promoting factor (NPF) for the Arp2/3 complex. The sequence is that of Myosin-1 (MYO1) from Coccidioides immitis (strain RS) (Valley fever fungus).